A 216-amino-acid chain; its full sequence is Large ribosomal subunit protein uL3 (216 aa).

A disordered region spans residues 132 to 157 (FRGQGASHGTQAVHRKPGSIGGCATP).

This sequence belongs to the universal ribosomal protein uL3 family. Part of the 50S ribosomal subunit. Forms a cluster with proteins L14 and L19.

In terms of biological role, one of the primary rRNA binding proteins, it binds directly near the 3'-end of the 23S rRNA, where it nucleates assembly of the 50S subunit. This Saccharopolyspora erythraea (strain ATCC 11635 / DSM 40517 / JCM 4748 / NBRC 13426 / NCIMB 8594 / NRRL 2338) protein is Large ribosomal subunit protein uL3.